The sequence spans 100 residues: Osteocalcin (100 aa).

The signal sequence occupies residues 1–23 (MRALTLLALLALAALCIAGQAGA). Positions 24–51 (KPSGAESSKGAAFVSKQEGSEVVKRPRR) are excised as a propeptide. Positions 52–98 (YLYQWLGAPVPYPDPLEPRREVCELNPDCDELADHIGFQEAYRRFYG) constitute a Gla domain. Ca(2+)-binding residues include glutamate 68, glutamate 72, glutamate 75, and aspartate 81. A 4-carboxyglutamate; partial modification is found at glutamate 68. 2 positions are modified to 4-carboxyglutamate: glutamate 72 and glutamate 75. Cysteine 74 and cysteine 80 are oxidised to a cystine.

This sequence belongs to the osteocalcin/matrix Gla protein family. Gamma-carboxyglutamate residues are formed by vitamin K dependent carboxylation by GGCX. These residues are essential for the binding of calcium. Decarboxylation promotes the hormone activity.

Its subcellular location is the secreted. Bone protein that constitutes 1-2% of the total bone protein, and which acts as a negative regulator of bone formation. Functions to limit bone formation without impairing bone resorption or mineralization. It binds strongly to apatite and calcium. In terms of biological role, the uncarboxylated form acts as a hormone secreted by osteoblasts, which regulates different cellular processes, such as energy metabolism, male fertility and brain development. Regulates of energy metabolism by acting as a hormone favoring pancreatic beta-cell proliferation, insulin secretion and sensitivity and energy expenditure. Uncarboxylated osteocalcin hormone also promotes testosterone production in the testes: acts as a ligand for G protein-coupled receptor GPRC6A at the surface of Leydig cells, initiating a signaling response that promotes the expression of enzymes required for testosterone synthesis in a CREB-dependent manner. Also acts as a regulator of brain development: osteocalcin hormone crosses the blood-brain barrier and acts as a ligand for GPR158 on neurons, initiating a signaling response that prevents neuronal apoptosis in the hippocampus, favors the synthesis of all monoamine neurotransmitters and inhibits that of gamma-aminobutyric acid (GABA). Osteocalcin also crosses the placenta during pregnancy and maternal osteocalcin is required for fetal brain development. The protein is Osteocalcin (BGLAP) of Homo sapiens (Human).